The sequence spans 931 residues: Mitochondrial cox1 translation regulator ppr4 (931 aa).

The transit peptide at 1–16 (MSKSFAYRHIWCFWRF) directs the protein to the mitochondrion. PPR repeat units follow at residues 247–277 (NEVLYTQYLGFLTKRGDYQIAIYMFDEMYRT), 282–316 (SFTACRLMIESLVRQNKFEEAISLYKKIIAKRPKI), 429–461 (HLLNCFLNSSTVSLDVSMVLELLRDLKKKKIKV), 462–496 (DERTLVICITIFSRRKDLFAMEKIHQYFSDQGIKT), 497–531 (SNQAYAALLDAYIEAEDTEKIELYLGKIRRLGITE), 598–632 (NVVHYSIAATVLGNLNQLDQLLLLEKRMESEGKAP), and 683–713 (PPSLFSSLIKEYTSLGDIKEAKQVLSTYLEY).

In terms of assembly, component of the MRH5C complex, composed of mrh5, ppr4, mtf2, and sls1. Proteins mtf2 and sls1 form a subcomplex that serves as a scaffold to bring mrh5 and ppr4 together. The MRH5C complex associates with the small subunit of the mitochondrial ribosome.

The protein localises to the mitochondrion. RNA-binding translation activation factor that as part of the MRH5C complex specifically recruits cox1 mRNA to the mitochondrial ribosome for translation initiation. This is Mitochondrial cox1 translation regulator ppr4 from Schizosaccharomyces pombe (strain 972 / ATCC 24843) (Fission yeast).